A 294-amino-acid chain; its full sequence is Sperm acrosome membrane-associated protein 1 (294 aa).

A signal peptide spans 1-29 (MSPRGTGCSAGLLMTVGWLLLAGLQSARG). At 30–221 (TNVTAAVQDA…LPATDAALIF (192 aa)) the chain is on the extracellular side. N-linked (GlcNAc...) asparagine glycosylation occurs at asparagine 31. The interval 42–70 (AHEGEGEEETENNDSETAENYAPPETEDV) is disordered. Acidic residues predominate over residues 46 to 58 (EGEEETENNDSET). The helical transmembrane segment at 222-242 (VLTIGVIICVFIIFLLIFIII) threads the bilayer. The Cytoplasmic segment spans residues 243–294 (NWAAVKAFWGAKASTPEVQSEQSSVRYKDSTSLDQLPTEMPGEDDALSEWNE). A Phosphoserine modification is found at serine 256. A compositionally biased stretch (polar residues) spans 258 to 267 (PEVQSEQSSV). The interval 258-294 (PEVQSEQSSVRYKDSTSLDQLPTEMPGEDDALSEWNE) is disordered. Residue tyrosine 269 is modified to Phosphotyrosine. Over residues 283–294 (PGEDDALSEWNE) the composition is skewed to acidic residues. Serine 290 carries the phosphoserine modification.

Interacts with CYLC1; the interaction may be relevant for proper acrosome attachment to the nuclear envelope. In terms of processing, N-glycosylated. As to expression, testis specific.

It localises to the cytoplasmic vesicle. The protein resides in the secretory vesicle. Its subcellular location is the acrosome inner membrane. Functionally, plays a role in acrosome formation and establishment of normal sperm morphology during spermatogenesis. Important for male fertility. This is Sperm acrosome membrane-associated protein 1 (SPACA1) from Homo sapiens (Human).